The following is a 350-amino-acid chain: Phenylalanine--tRNA ligase alpha subunit (350 aa).

Position 257 (E257) interacts with Mg(2+).

Belongs to the class-II aminoacyl-tRNA synthetase family. Phe-tRNA synthetase alpha subunit type 1 subfamily. In terms of assembly, tetramer of two alpha and two beta subunits. Mg(2+) serves as cofactor.

The protein resides in the cytoplasm. It carries out the reaction tRNA(Phe) + L-phenylalanine + ATP = L-phenylalanyl-tRNA(Phe) + AMP + diphosphate + H(+). This is Phenylalanine--tRNA ligase alpha subunit from Listeria welshimeri serovar 6b (strain ATCC 35897 / DSM 20650 / CCUG 15529 / CIP 8149 / NCTC 11857 / SLCC 5334 / V8).